Here is a 388-residue protein sequence, read N- to C-terminus: Succinate--CoA ligase [ADP-forming] subunit beta (388 aa).

The region spanning 9-244 is the ATP-grasp domain; that stretch reads KQLFAEYGLP…PSQDDPREAH (236 aa). Residues Lys46, 53 to 55, Glu99, Thr102, and Glu107 each bind ATP; that span reads GRG. Asn199 and Asp213 together coordinate Mg(2+). Substrate is bound by residues Asn264 and 321–323; that span reads GIV.

It belongs to the succinate/malate CoA ligase beta subunit family. In terms of assembly, heterotetramer of two alpha and two beta subunits. The cofactor is Mg(2+).

The catalysed reaction is succinate + ATP + CoA = succinyl-CoA + ADP + phosphate. The enzyme catalyses GTP + succinate + CoA = succinyl-CoA + GDP + phosphate. Its pathway is carbohydrate metabolism; tricarboxylic acid cycle; succinate from succinyl-CoA (ligase route): step 1/1. Succinyl-CoA synthetase functions in the citric acid cycle (TCA), coupling the hydrolysis of succinyl-CoA to the synthesis of either ATP or GTP and thus represents the only step of substrate-level phosphorylation in the TCA. The beta subunit provides nucleotide specificity of the enzyme and binds the substrate succinate, while the binding sites for coenzyme A and phosphate are found in the alpha subunit. In Pseudomonas fluorescens (strain Pf0-1), this protein is Succinate--CoA ligase [ADP-forming] subunit beta.